The following is a 380-amino-acid chain: Chromo domain-containing protein 2 (380 aa).

2 disordered regions span residues 14-58 (ISES…SLYG) and 100-156 (KLSP…VPLN). Positions 33-52 (NSINNKSSTASLESPQNGSW) are enriched in polar residues. Positions 108–119 (EDSEDKKEEDES) are enriched in acidic residues. Positions 121–140 (SYKNEFKSSSSASVSSNFEK) are enriched in low complexity. The Chromo domain maps to 176–238 (FAVEMILDSR…SRGGKPDLSS (63 aa)). A disordered region spans residues 250–273 (SNEASYVEKDESSNSDDSISYKRR).

It localises to the nucleus. Its function is as follows. Component of the kinetochore which plays a role in stabilizing microtubules and so allowing accurate chromosome segregation. The sequence is that of Chromo domain-containing protein 2 (chp2) from Schizosaccharomyces pombe (strain 972 / ATCC 24843) (Fission yeast).